Here is an 86-residue protein sequence, read N- to C-terminus: Probable weak neurotoxin NNAM3 (86 aa).

A signal peptide spans 1 to 21; sequence MKTLLLTLVVVTIVCLDLGYT. Intrachain disulfides connect C24-C45, C27-C32, C38-C63, C67-C78, and C79-C84.

The protein belongs to the three-finger toxin family. Ancestral subfamily. Orphan group II sub-subfamily. As to expression, expressed by the venom gland.

Its subcellular location is the secreted. Its function is as follows. Binds with low affinity to muscular (alpha-1-beta-1-delta-epsilon/CHRNA1-CHRNB1-CHRND-CHRNE) and very low affinity to neuronal (alpha-7/CHRNA7) nicotinic acetylcholine receptor (nAChR). This Naja atra (Chinese cobra) protein is Probable weak neurotoxin NNAM3.